Reading from the N-terminus, the 697-residue chain is Elongation factor G (697 aa).

Positions 8 to 282 (ENTRNIGIMA…AIVDYMPSPV (275 aa)) constitute a tr-type G domain. Residues 17–24 (AHIDAGKT), 81–85 (DTPGH), and 135–138 (NKMD) contribute to the GTP site.

It belongs to the TRAFAC class translation factor GTPase superfamily. Classic translation factor GTPase family. EF-G/EF-2 subfamily.

The protein resides in the cytoplasm. In terms of biological role, catalyzes the GTP-dependent ribosomal translocation step during translation elongation. During this step, the ribosome changes from the pre-translocational (PRE) to the post-translocational (POST) state as the newly formed A-site-bound peptidyl-tRNA and P-site-bound deacylated tRNA move to the P and E sites, respectively. Catalyzes the coordinated movement of the two tRNA molecules, the mRNA and conformational changes in the ribosome. The chain is Elongation factor G from Acetivibrio thermocellus (strain ATCC 27405 / DSM 1237 / JCM 9322 / NBRC 103400 / NCIMB 10682 / NRRL B-4536 / VPI 7372) (Clostridium thermocellum).